Here is a 678-residue protein sequence, read N- to C-terminus: Protein CASP (678 aa).

Over 1–619 (MAANVGSMFQ…LVLSNKMART (619 aa)) the chain is Cytoplasmic. Coiled coils occupy residues 67-450 (LLKS…QDLS) and 502-556 (LSII…FLQS). Residue S586 is modified to Phosphoserine. The chain crosses the membrane as a helical; Anchor for type IV membrane protein span at residues 620-640 (IGFFYTLFLHCLVFLVLYKLA). The Lumenal portion of the chain corresponds to 641–678 (WSESMERDCATFCAKKFADHLHKFHENDNGAAAGDLWQ).

The protein belongs to the CASP family. In terms of assembly, homodimer; disulfide-linked. Interacts with GOLGA5.

The protein resides in the golgi apparatus membrane. May be involved in intra-Golgi retrograde transport. In Homo sapiens (Human), this protein is Protein CASP (CUX1).